We begin with the raw amino-acid sequence, 415 residues long: uncharacterized protein (415 aa).

Disordered regions lie at residues 39–77 (FLPPSSNTTLQKESQEGSPPPTQSQEPLKPMENVSRPIH), 220–247 (AEDKETTSKGSNAKEESKNGLHPKHPLT), and 346–415 (VTLN…NGSK). 3 stretches are compositionally biased toward basic and acidic residues: residues 220-238 (AEDKETTSKGSNAKEESKN), 365-380 (DVNKDPKLNLCPDKHM), and 400-415 (SKTEKIYPEPRRNGSK).

This is an uncharacterized protein from Rattus norvegicus (Rat).